The sequence spans 124 residues: Holo-[acyl-carrier-protein] synthase (124 aa).

Residues Asp8 and Glu57 each contribute to the Mg(2+) site.

Belongs to the P-Pant transferase superfamily. AcpS family. Mg(2+) serves as cofactor.

Its subcellular location is the cytoplasm. It carries out the reaction apo-[ACP] + CoA = holo-[ACP] + adenosine 3',5'-bisphosphate + H(+). Functionally, transfers the 4'-phosphopantetheine moiety from coenzyme A to a Ser of acyl-carrier-protein. In Leptospira borgpetersenii serovar Hardjo-bovis (strain JB197), this protein is Holo-[acyl-carrier-protein] synthase.